The primary structure comprises 1111 residues: Zinc finger protein GLI1 (1111 aa).

The segment at 52–78 (GYGAARETSSCTEGSLFPPPPPPRSSV) is disordered. Residues 123 to 127 (SYGHL) are interaction with SUFU. C2H2-type zinc fingers lie at residues 238–263 (TDCRWDGCSQEFDSQEQLVHHINSEH), 271–298 (FVCHWGGCSRELRPFKAQYMLVVHMRRH), 304–328 (HKCTFEGCRKSYSRLENLKTHLRSH), 334–359 (YMCEQEGCSKAFSNASDRAKHQNRTH), and 365–390 (YVCKLPGCTKRYTDPSSLRKHVKTVH). Residues 286 to 294 (KAQYMLVVH) form an interaction with DNA region. Interaction with DNA regions lie at residues 348–353 (ASDRAK) and 378–384 (DPSSLRK). The tract at residues 378 to 487 (DPSSLRKHVK…EDLSSLDEGP (110 aa)) is disordered. Residues 416–431 (EPKREREGGSGREESR) show a composition bias toward basic and acidic residues. Residues 439 to 465 (MPQQSPGAQSSCSSDHSPAGSAANTDS) show a composition bias toward polar residues. The residue at position 520 (Lys520) is an N6-acetyllysine. Disordered regions lie at residues 528–583 (GAPV…LPGL), 598–649 (ARGS…RAAD), 673–692 (TGRNFDPHHPTSVYSPQPPS), and 832–891 (PCLN…SSHS). A compositionally biased stretch (low complexity) spans 546–562 (SSSSSMSSAYTVSRRSS). Residues 640 to 649 (RASDPARAAD) are compositionally biased toward basic and acidic residues. The span at 855–870 (LPQPQYPQSGPYPQPP) shows a compositional bias: pro residues. Residue Lys1008 forms a Glycyl lysine isopeptide (Lys-Gly) (interchain with G-Cter in SUMO2) linkage. Residues 1064 to 1093 (LSPPLSHEQGDSSKNTPSPSGPPNMAVGNM) are disordered.

Belongs to the GLI C2H2-type zinc-finger protein family. In terms of assembly, interacts with KIF7. Interacts with STK36. Interacts with ZIC1; the interaction enhances transcription activation. Interacts with SUFU; this inhibits transcriptional activation by GLI1. Phosphorylated in vitro by ULK3. Post-translationally, acetylation at Lys-520 down-regulates transcriptional activity. Deacetylated by HDAC1. In terms of processing, ubiquitinated by the CRL2(FEM1B) complex, suppressing GLI1 transcriptional activator activity.

Its subcellular location is the cytoplasm. It localises to the nucleus. In terms of biological role, acts as a transcriptional activator. Binds to the DNA consensus sequence 5'-GACCACCCA-3'. Regulates the transcription of specific genes during normal development. Plays a role in craniofacial development and digital development, as well as development of the central nervous system and gastrointestinal tract. Mediates SHH signaling. Plays a role in cell proliferation and differentiation via its role in SHH signaling. The protein is Zinc finger protein GLI1 (Gli1) of Mus musculus (Mouse).